The primary structure comprises 444 residues: Exodeoxyribonuclease 7 large subunit (444 aa).

This sequence belongs to the XseA family. In terms of assembly, heterooligomer composed of large and small subunits.

Its subcellular location is the cytoplasm. The catalysed reaction is Exonucleolytic cleavage in either 5'- to 3'- or 3'- to 5'-direction to yield nucleoside 5'-phosphates.. In terms of biological role, bidirectionally degrades single-stranded DNA into large acid-insoluble oligonucleotides, which are then degraded further into small acid-soluble oligonucleotides. The polypeptide is Exodeoxyribonuclease 7 large subunit (Xylella fastidiosa (strain 9a5c)).